Reading from the N-terminus, the 234-residue chain is Interleukin-34 (234 aa).

An N-terminal signal peptide occupies residues 1 to 20 (MPQGLAWLRYLGILLGMALG). An N-linked (GlcNAc...) asparagine glycan is attached at asparagine 76. The tract at residues 191–234 (EAPQPQPRSPASAQCEAAQLYPLPQPPSTSLPRVLGPSAGPPTQ) is disordered.

Belongs to the IL-34 family. In terms of assembly, homodimer. Interacts with CSF1R.

It localises to the secreted. Cytokine that promotes the proliferation, survival and differentiation of monocytes and macrophages. Promotes the release of pro-inflammatory chemokines, and thereby plays an important role in innate immunity and in inflammatory processes. Plays an important role in the regulation of osteoclast proliferation and differentiation, and in the regulation of bone resorption. Signaling via CSF1R and its downstream effectors stimulates phosphorylation of MAPK1/ERK2 AND MAPK3/ERK1. The sequence is that of Interleukin-34 from Bos taurus (Bovine).